The primary structure comprises 109 residues: Nucleoid-associated protein Ldb1634 (109 aa).

The segment at 18 to 40 (MMKQAKKLQEQMAQEQENITTQE) is disordered.

The protein belongs to the YbaB/EbfC family. Homodimer.

It localises to the cytoplasm. It is found in the nucleoid. Its function is as follows. Binds to DNA and alters its conformation. May be involved in regulation of gene expression, nucleoid organization and DNA protection. The polypeptide is Nucleoid-associated protein Ldb1634 (Lactobacillus delbrueckii subsp. bulgaricus (strain ATCC 11842 / DSM 20081 / BCRC 10696 / JCM 1002 / NBRC 13953 / NCIMB 11778 / NCTC 12712 / WDCM 00102 / Lb 14)).